Here is a 901-residue protein sequence, read N- to C-terminus: Protein translocase subunit SecA (901 aa).

ATP is bound by residues Gln85, 103–107 (GEGKT), and Asp510. The disordered stretch occupies residues 848-901 (RINQNNLPVDENSQTTQNSETEDYSDRRIGRNEPCPCGSGKKYKHCHGSRVARQ). A compositionally biased stretch (polar residues) spans 849 to 866 (INQNNLPVDENSQTTQNS). Zn(2+) contacts are provided by Cys882, Cys884, Cys893, and His894. A compositionally biased stretch (basic residues) spans 888–901 (KKYKHCHGSRVARQ).

This sequence belongs to the SecA family. As to quaternary structure, monomer and homodimer. Part of the essential Sec protein translocation apparatus which comprises SecA, SecYEG and auxiliary proteins SecDF-YajC and YidC. Forms a complex with SecB. Requires Zn(2+) as cofactor.

It is found in the cell inner membrane. The protein localises to the cytoplasm. It catalyses the reaction ATP + H2O + cellular proteinSide 1 = ADP + phosphate + cellular proteinSide 2.. Its function is as follows. Part of the Sec protein translocase complex. Interacts with the SecYEG preprotein conducting channel. Has a central role in coupling the hydrolysis of ATP to the transfer of proteins into and across the cell membrane, serving both as a receptor for the preprotein-SecB complex and as an ATP-driven molecular motor driving the stepwise translocation of polypeptide chains across the membrane. The protein is Protein translocase subunit SecA of Haemophilus influenzae (strain ATCC 51907 / DSM 11121 / KW20 / Rd).